We begin with the raw amino-acid sequence, 592 residues long: Beta-fructofuranosidase, insoluble isoenzyme 2 (592 aa).

The N-terminal stretch at 1 to 40 (MLIRCFHIKMALVTCFHSMLFLSAVVFIFSLDVNIRGVEA) is a signal peptide. D75 is a catalytic residue. N-linked (GlcNAc...) asparagine glycosylation is found at N171, N195, N310, N347, and N568.

It belongs to the glycosyl hydrolase 32 family.

Its subcellular location is the secreted. The protein localises to the cell wall. It catalyses the reaction Hydrolysis of terminal non-reducing beta-D-fructofuranoside residues in beta-D-fructofuranosides.. In terms of biological role, may play an important role in phloem unloading and in stress response. This Daucus carota (Wild carrot) protein is Beta-fructofuranosidase, insoluble isoenzyme 2 (INV2).